A 626-amino-acid chain; its full sequence is Lipoprotein LpqB (626 aa).

The signal sequence occupies residues 1-23; it reads MIGQANRIAAAVSTACLAVLLAG. A lipid anchor (N-palmitoyl cysteine) is attached at Cys24. Cys24 carries the S-diacylglycerol cysteine lipid modification. Positions 428-457 are disordered; sequence EAEREEDLADDTEPGDTAVGSTERRETDRG. Acidic residues predominate over residues 430-441; it reads EREEDLADDTEP.

This sequence belongs to the LpqB lipoprotein family.

The protein resides in the cell membrane. This chain is Lipoprotein LpqB, found in Thermobifida fusca (strain YX).